A 439-amino-acid chain; its full sequence is Dolichyl-diphosphooligosaccharide--protein glycosyltransferase 48 kDa subunit (439 aa).

Residues Met1 to Ser26 form the signal peptide. Residues Gly27–Pro410 are Lumenal-facing. A helical membrane pass occupies residues Tyr411–Leu430. Over His431 to Asp439 the chain is Cytoplasmic.

The protein belongs to the DDOST 48 kDa subunit family. As to quaternary structure, component of the oligosaccharyltransferase (OST) complex. OST exists in two different complex forms which contain common core subunits RPN1, RPN2, OST48, OST4, DAD1 and TMEM258, either STT3A or STT3B as catalytic subunits, and form-specific accessory subunits. STT3A complex assembly occurs through the formation of 3 subcomplexes. Subcomplex 1 contains RPN1 and TMEM258, subcomplex 2 contains the STT3A-specific subunits STT3A, DC2/OSTC, and KCP2 as well as the core subunit OST4, and subcomplex 3 contains RPN2, DAD1, and OST48. The STT3A complex can form stable complexes with the Sec61 complex or with both the Sec61 and TRAP complexes. Interacts with SMIM22.

The protein resides in the endoplasmic reticulum membrane. It participates in protein modification; protein glycosylation. Its function is as follows. Subunit of the oligosaccharyl transferase (OST) complex that catalyzes the initial transfer of a defined glycan (Glc(3)Man(9)GlcNAc(2) in eukaryotes) from the lipid carrier dolichol-pyrophosphate to an asparagine residue within an Asn-X-Ser/Thr consensus motif in nascent polypeptide chains, the first step in protein N-glycosylation. N-glycosylation occurs cotranslationally and the complex associates with the Sec61 complex at the channel-forming translocon complex that mediates protein translocation across the endoplasmic reticulum (ER). All subunits are required for a maximal enzyme activity. Required for the assembly of both SST3A- and SS3B-containing OST complexes. This is Dolichyl-diphosphooligosaccharide--protein glycosyltransferase 48 kDa subunit from Pongo abelii (Sumatran orangutan).